A 488-amino-acid polypeptide reads, in one-letter code: MGKFLATLILFFQFCPLILSDYSPSCCTLTIGVSSYHSKPCNPAQPVCSWTLDLLALSADQALQPPCPNLVSYSSYHATYSLYLFPHWIKKPNRNGGGYYSASYSDPCSLKCPYLGCQSWTCPYTGAVSSPYWKFQQDVNFTQEVSRLNINLHFSKCGFPFSLLVDAPGYDPIWFLNTEPSQLPPTAPPLLPHSNLDHILEPSIPWKSKLLTLVQLTLQSTNYTCIVCIDRASLSTWHVLYSPNVSVPSSSSTPLLYPSLALPAPHLTLPFNWTHCFDPQIQAIVSSPCHNSLILPPFSLSPVPTLGSRSRRAVPVAVWLVSALAMGAGMAGGITGSMSLASGRSLLHEVDKDISQLTQAIVKNHKNLLKIAQYAAQNRRGLDLLFWEQGGLCKALQEQCCFLNITNSHVSILQERPPLENRVLTGWGLNWDLGLSQWAREALQTGITLVALLLLVILAGPCILRQLRHLPSRVRYPHYSLINPESSL.

The first 20 residues, 1 to 20 (MGKFLATLILFFQFCPLILS), serve as a signal peptide directing secretion. At 21 to 442 (DYSPSCCTLT…LGLSQWAREA (422 aa)) the chain is on the extracellular side. 2 N-linked (GlcNAc...) asparagine; by host glycosylation sites follow: Asn140 and Asn222. A CXXC motif is present at residues 225 to 228 (CIVC). Intrachain disulfides connect Cys225–Cys228, Cys225–Cys401, and Cys393–Cys400. Asn244 and Asn272 each carry an N-linked (GlcNAc...) asparagine; by host glycan. The fusion peptide stretch occupies residues 313–333 (AVPVAVWLVSALAMGAGMAGG). 2 coiled-coil regions span residues 341 to 387 (ASGR…LLFW) and 397 to 429 (QEQC…GWGL). The immunosuppression stretch occupies residues 376 to 392 (AQNRRGLDLLFWEQGGL). A CX6CC motif is present at residues 393 to 401 (CKALQEQCC). Residue Asn404 is glycosylated (N-linked (GlcNAc...) asparagine; by host). The chain crosses the membrane as a helical span at residues 443–463 (LQTGITLVALLLLVILAGPCI). Cys462 carries S-palmitoyl cysteine; by host lipidation. At 464-488 (LRQLRHLPSRVRYPHYSLINPESSL) the chain is on the cytoplasmic side.

The mature envelope protein (Env) consists of a trimer of SU-TM heterodimers attached by a labile interchain disulfide bond. Specific enzymatic cleavages in vivo yield mature proteins. Envelope glycoproteins are synthesized as an inactive precursor that is N-glycosylated and processed likely by host cell furin or by a furin-like protease in the Golgi to yield the mature SU and TM proteins. The cleavage site between SU and TM requires the minimal sequence [KR]-X-[KR]-R. Post-translationally, the CXXC motif is highly conserved across a broad range of retroviral envelope proteins. It is thought to participate in the formation of a labile disulfide bond possibly with the CX6CC motif present in the transmembrane protein. Isomerization of the intersubunit disulfide bond to an SU intrachain disulfide bond is thought to occur upon receptor recognition in order to allow membrane fusion. In terms of processing, the transmembrane protein is palmitoylated.

Its subcellular location is the virion membrane. The protein resides in the host cell membrane. Its function is as follows. The surface protein (SU) attaches the virus to the host cell by binding to its receptor. This interaction triggers the refolding of the transmembrane protein (TM) and is thought to activate its fusogenic potential by unmasking its fusion peptide. Fusion occurs at the host cell plasma membrane. Functionally, the transmembrane protein (TM) acts as a class I viral fusion protein. Under the current model, the protein has at least 3 conformational states: pre-fusion native state, pre-hairpin intermediate state, and post-fusion hairpin state. During viral and target cell membrane fusion, the coiled coil regions (heptad repeats) assume a trimer-of-hairpins structure, positioning the fusion peptide in close proximity to the C-terminal region of the ectodomain. The formation of this structure appears to drive apposition and subsequent fusion of viral and target cell membranes. Membranes fusion leads to delivery of the nucleocapsid into the cytoplasm. In Human T-cell leukemia virus 1 (isolate Zaire EL subtype B) (HTLV-1), this protein is Envelope glycoprotein gp62 (env).